Reading from the N-terminus, the 798-residue chain is Phenylalanine--tRNA ligase beta subunit (798 aa).

Residues Phe39 to Val148 enclose the tRNA-binding domain. The 77-residue stretch at Trp402–Pro478 folds into the B5 domain. 4 residues coordinate Mg(2+): Asp456, Asp462, Glu465, and Glu466. The 91-residue stretch at Pro708 to Ile798 folds into the FDX-ACB domain.

Belongs to the phenylalanyl-tRNA synthetase beta subunit family. Type 1 subfamily. In terms of assembly, tetramer of two alpha and two beta subunits. Mg(2+) serves as cofactor.

The protein resides in the cytoplasm. The enzyme catalyses tRNA(Phe) + L-phenylalanine + ATP = L-phenylalanyl-tRNA(Phe) + AMP + diphosphate + H(+). This is Phenylalanine--tRNA ligase beta subunit from Nitratidesulfovibrio vulgaris (strain ATCC 29579 / DSM 644 / CCUG 34227 / NCIMB 8303 / VKM B-1760 / Hildenborough) (Desulfovibrio vulgaris).